A 489-amino-acid polypeptide reads, in one-letter code: Blue-light-activated histidine kinase (489 aa).

The 75-residue stretch at Ala-19 to Lys-93 folds into the PAS domain. Residue Cys-69 is modified to S-4a-FMN cysteine. PAC domains lie at Lys-93–Lys-147 and Tyr-232–Leu-281. Residues Asn-259 to Thr-341 form an HWE histidine kinase domain region. Position 288 is a phosphohistidine; by autocatalysis (His-288).

FMN binds covalently to cysteine after exposure to blue light and this bond is spontaneously broken in the dark.

It catalyses the reaction ATP + protein L-histidine = ADP + protein N-phospho-L-histidine.. In terms of biological role, photosensitive kinase that is involved in increased bacterial virulence upon exposure to light. Once ejected from an infected animal host, sunlight acts as an environmental signal that increases the virulence of the bacterium, preparing it for infection of the next host. This photoreceptor protein is directly related to the bacterium's survival and replication within host macrophages, as it is required for optimal replication of bacteria inside macrophages. The protein is Blue-light-activated histidine kinase of Brucella abortus (strain 2308).